Reading from the N-terminus, the 304-residue chain is tRNA pseudouridine synthase B (304 aa).

The Nucleophile role is filled by aspartate 44.

Belongs to the pseudouridine synthase TruB family. Type 1 subfamily.

It catalyses the reaction uridine(55) in tRNA = pseudouridine(55) in tRNA. Its function is as follows. Responsible for synthesis of pseudouridine from uracil-55 in the psi GC loop of transfer RNAs. The sequence is that of tRNA pseudouridine synthase B from Novosphingobium aromaticivorans (strain ATCC 700278 / DSM 12444 / CCUG 56034 / CIP 105152 / NBRC 16084 / F199).